The sequence spans 393 residues: LL-diaminopimelate aminotransferase (393 aa).

The substrate site is built by tyrosine 14 and glycine 41. Residues tyrosine 71, 104 to 105 (AK), tyrosine 128, asparagine 174, tyrosine 205, and 233 to 235 (SFS) each bind pyridoxal 5'-phosphate. Positions 105, 128, and 174 each coordinate substrate. Lysine 236 carries the N6-(pyridoxal phosphate)lysine modification. 2 residues coordinate pyridoxal 5'-phosphate: arginine 244 and asparagine 275. Positions 275 and 369 each coordinate substrate.

Belongs to the class-I pyridoxal-phosphate-dependent aminotransferase family. LL-diaminopimelate aminotransferase subfamily. As to quaternary structure, homodimer. Pyridoxal 5'-phosphate serves as cofactor.

It carries out the reaction (2S,6S)-2,6-diaminopimelate + 2-oxoglutarate = (S)-2,3,4,5-tetrahydrodipicolinate + L-glutamate + H2O + H(+). Its pathway is amino-acid biosynthesis; L-lysine biosynthesis via DAP pathway; LL-2,6-diaminopimelate from (S)-tetrahydrodipicolinate (aminotransferase route): step 1/1. Functionally, involved in the synthesis of meso-diaminopimelate (m-DAP or DL-DAP), required for both lysine and peptidoglycan biosynthesis. Catalyzes the direct conversion of tetrahydrodipicolinate to LL-diaminopimelate. This Chlamydia muridarum (strain MoPn / Nigg) protein is LL-diaminopimelate aminotransferase.